A 1036-amino-acid polypeptide reads, in one-letter code: Pre-mRNA-processing factor 39-2 (1036 aa).

Residues 1-24 form a disordered region; it reads MVTTEVRTAVSDKEPLQRSPELDS. HAT repeat units follow at residues 62-94, 96-128, 131-166, 168-201, 278-310, and 312-344; these read DDIE…HKIK, CTLE…FAVA, EDPH…YLLG, QQWS…IAAS, CFET…FGET, and GDFD…FVES. 3 disordered regions span residues 595 to 618, 714 to 767, and 995 to 1036; these read GISS…YGTQ, PSGS…PVGT, and KGDE…ISSI. Residues 714 to 726 show a composition bias toward low complexity; sequence PSGSQSPQSYQSQ. Residues 740-755 show a composition bias toward basic and acidic residues; sequence RDLNQMHRDSKPRSQE. Residues 1002 to 1036 show a composition bias toward polar residues; that stretch reads SMPQGSTTNSDIQKSQESGAVNEANLSSDTSISSI.

Belongs to the PRP39 family.

It is found in the nucleus. Involved in pre-mRNA splicing. This chain is Pre-mRNA-processing factor 39-2, found in Arabidopsis thaliana (Mouse-ear cress).